Consider the following 313-residue polypeptide: Vacuolar membrane protein ZYRO0A01628g (313 aa).

The span at 22–37 shows a compositional bias: low complexity; it reads SASKTSSHTSKTSYSA. Residues 22–48 form a disordered region; that stretch reads SASKTSSHTSKTSYSAVVTPPSSDGNP. Residues 59-79 traverse the membrane as a helical segment; the sequence is GLIYIIVGGTAAAIFAFIILW. Low complexity predominate over residues 221 to 234; sequence TSLPSASESSSNLL. Positions 221–313 are disordered; it reads TSLPSASESS…LLEGNDDGTT (93 aa). Residues 235-247 are compositionally biased toward basic and acidic residues; it reads DRPERTASPERKP. The span at 248–257 shows a compositional bias: basic residues; the sequence is KAYGRYHQRN. Polar residues predominate over residues 285–301; sequence NVNNNNKKHGTTPSRFL.

This sequence belongs to the PRM5 family.

Its subcellular location is the vacuole membrane. The protein is Vacuolar membrane protein ZYRO0A01628g of Zygosaccharomyces rouxii (strain ATCC 2623 / CBS 732 / NBRC 1130 / NCYC 568 / NRRL Y-229).